A 262-amino-acid polypeptide reads, in one-letter code: Shikimate dehydrogenase (NADP(+)) (262 aa).

Shikimate is bound by residues 13–15 (SLS) and threonine 59. Catalysis depends on lysine 63, which acts as the Proton acceptor. Aspartate 75 is an NADP(+) binding site. The shikimate site is built by asparagine 84 and aspartate 99. Residues 122–126 (GAGGA), 144–149 (NRTLEK), and methionine 205 contribute to the NADP(+) site. A shikimate-binding site is contributed by tyrosine 207. Glycine 228 lines the NADP(+) pocket.

This sequence belongs to the shikimate dehydrogenase family. Homodimer.

The catalysed reaction is shikimate + NADP(+) = 3-dehydroshikimate + NADPH + H(+). It functions in the pathway metabolic intermediate biosynthesis; chorismate biosynthesis; chorismate from D-erythrose 4-phosphate and phosphoenolpyruvate: step 4/7. Functionally, involved in the biosynthesis of the chorismate, which leads to the biosynthesis of aromatic amino acids. Catalyzes the reversible NADPH linked reduction of 3-dehydroshikimate (DHSA) to yield shikimate (SA). The sequence is that of Shikimate dehydrogenase (NADP(+)) from Ignicoccus hospitalis (strain KIN4/I / DSM 18386 / JCM 14125).